A 194-amino-acid polypeptide reads, in one-letter code: Large ribosomal subunit protein bL25 (194 aa).

This sequence belongs to the bacterial ribosomal protein bL25 family. CTC subfamily. In terms of assembly, part of the 50S ribosomal subunit; part of the 5S rRNA/L5/L18/L25 subcomplex. Contacts the 5S rRNA. Binds to the 5S rRNA independently of L5 and L18.

In terms of biological role, this is one of the proteins that binds to the 5S RNA in the ribosome where it forms part of the central protuberance. This chain is Large ribosomal subunit protein bL25, found in Geobacter sulfurreducens (strain ATCC 51573 / DSM 12127 / PCA).